The primary structure comprises 54 residues: Large ribosomal subunit protein bL33 (54 aa).

Belongs to the bacterial ribosomal protein bL33 family.

In Stenotrophomonas maltophilia (strain R551-3), this protein is Large ribosomal subunit protein bL33.